Reading from the N-terminus, the 1112-residue chain is Lysylphosphatidylglycerol biosynthesis bifunctional protein LysX (1112 aa).

The tract at residues 1-613 (MTLTSPPRTR…VLHHDGTAPD (613 aa)) is phosphatidylglycerol lysyltransferase. 7 helical membrane passes run 18 to 38 (VPAAAGWTVGVIATLSLIASV), 60 to 80 (FPDTSFAWAFVLALLAGALAA), 84 to 104 (IAWWILLLYMVAAAGWNVADL), 118 to 138 (VIGLAFHLAAVAFLLLARPLF), 152 to 172 (GVLAAGMAVGVLVGWGLLELF), 209 to 229 (VNALLGLFGALALMAAAIVLF), and 308 to 328 (AWLALCGTYGWAPGVMGASVG). The interval 614-1112 (MSGLRTDTAD…TLPFPLARPR (499 aa)) is lysine--tRNA ligase. Residues 675–748 (VAGRVLRIRD…GTRSLLVRHW (74 aa)) constitute a DNA-binding region (OB). Residues Asp1024 and Glu1031 each contribute to the Mg(2+) site.

In the N-terminal section; belongs to the LPG synthetase family. It in the C-terminal section; belongs to the class-II aminoacyl-tRNA synthetase family. The cofactor is Mg(2+).

It is found in the cell membrane. The enzyme catalyses tRNA(Lys) + L-lysine + ATP = L-lysyl-tRNA(Lys) + AMP + diphosphate. The catalysed reaction is L-lysyl-tRNA(Lys) + a 1,2-diacyl-sn-glycero-3-phospho-(1'-sn-glycerol) = a 1,2-diacyl-sn-glycero-3-phospho-1'-(3'-O-L-lysyl)-sn-glycerol + tRNA(Lys). Catalyzes the production of L-lysyl-tRNA(Lys)transfer and the transfer of a lysyl group from L-lysyl-tRNA(Lys) to membrane-bound phosphatidylglycerol (PG), which produces lysylphosphatidylglycerol (LPG), one of the components of the bacterial membrane with a positive net charge. LPG synthesis contributes to the resistance to cationic antimicrobial peptides (CAMPs) and likely protects M.tuberculosis against the CAMPs produced by competiting microorganisms (bacteriocins). In fact, the modification of anionic phosphatidylglycerol with positively charged L-lysine results in repulsion of the peptides. The protein is Lysylphosphatidylglycerol biosynthesis bifunctional protein LysX (lysX) of Mycobacterium sp. (strain KMS).